The sequence spans 1169 residues: C5a peptidase (1169 aa).

An N-terminal signal peptide occupies residues 1-31; the sequence is MRKKQKLPFDKLAIALMSTSILLNAQSDIKA. Positions 33 to 111 are disordered; it reads TVTEDTPATE…ETIRDLNDPS (79 aa). Positions 48-67 are enriched in polar residues; it reads PQQTAVSEEAPSSSSKETNP. Positions 101 to 583 constitute a Peptidase S8 domain; the sequence is KETIRDLNDP…AGAVDAKKAS (483 aa). Basic and acidic residues predominate over residues 102 to 111; it reads ETIRDLNDPS. Residues aspartate 132, histidine 195, and serine 514 each act as charge relay system in the active site. The segment at 1028 to 1135 is disordered; sequence NLLEGHSNKP…RDQLPTTNDK (108 aa). 3 stretches are compositionally biased toward basic and acidic residues: residues 1033–1056, 1063–1073, and 1080–1092; these read HSNK…KPEQ, PDKKPEAKPEQ, and PDKK…EKDS. 4 consecutive repeat copies span residues 1036–1052, 1053–1069, 1070–1086, and 1087–1103. A 4 X 17 AA tandem repeats region spans residues 1036–1103; that stretch reads KPEQDGSDQV…GQTPGKTPQK (68 aa). Positions 1093 to 1108 are enriched in polar residues; sequence SGQTPGKTPQKGQPSR. An LPXTG sorting signal motif is present at residues 1129 to 1133; it reads LPTTN. Position 1132 is a pentaglycyl murein peptidoglycan amidated threonine (threonine 1132). Positions 1133-1169 are cleaved as a propeptide — removed by sortase; the sequence is NDKDTNRLHLLKLVMTTFFFGLVAHIFKTKRQKETKK.

This sequence belongs to the peptidase S8 family. Cleaved by SpeB protease; leading to its degradation. Degradation by SpeB is probably strictly regulated to preserve integrity of C5a peptidase.

It is found in the secreted. The protein resides in the cell wall. The catalysed reaction is The primary cleavage site is at 67-His-|-Lys-68 in human C5a with a minor secondary cleavage site at 58-Ala-|-Ser-59.. Its function is as follows. This virulence factor of S.pyogenes specifically cleaves the human serum chemotaxin C5a at '68-Lys-|-Asp-69' bond near its C-terminus, destroying its ability to serve as a chemoattractant. In Streptococcus pyogenes serotype M3 (strain ATCC BAA-595 / MGAS315), this protein is C5a peptidase (scpA).